A 572-amino-acid chain; its full sequence is Hemagglutinin-neuraminidase (572 aa).

The Intravirion portion of the chain corresponds to 1 to 31 (MEYWKHTNHGKDAGNELETSMATHGNKITNK). The helical transmembrane segment at 32–52 (ITYILWTIILVLLSIVFIIVL) threads the bilayer. Residues 53–572 (INSIKSEKAH…FKTEIPKSCS (520 aa)) lie on the Virion surface side of the membrane. Cystine bridges form between Cys190-Cys214 and Cys256-Cys269. The interval 252–257 (NRKSCS) is involved in neuraminidase activity. Asn308 and Asn351 each carry an N-linked (GlcNAc...) asparagine; by host glycan. Intrachain disulfides connect Cys355–Cys469 and Cys463–Cys473. Asn523 carries an N-linked (GlcNAc...) asparagine; by host glycan. Residues Cys535 and Cys544 are joined by a disulfide bond.

Belongs to the paramyxoviruses hemagglutinin-neuraminidase family. Homotetramer; composed of disulfide-linked homodimers. Interacts with F protein trimer.

It localises to the virion membrane. Its subcellular location is the host cell membrane. It carries out the reaction Hydrolysis of alpha-(2-&gt;3)-, alpha-(2-&gt;6)-, alpha-(2-&gt;8)- glycosidic linkages of terminal sialic acid residues in oligosaccharides, glycoproteins, glycolipids, colominic acid and synthetic substrates.. In terms of biological role, attaches the virus to sialic acid-containing cell receptors and thereby initiating infection. Binding of HN protein to the receptor induces a conformational change that allows the F protein to trigger virion/cell membranes fusion. Neuraminidase activity ensures the efficient spread of the virus by dissociating the mature virions from the neuraminic acid containing glycoproteins. This Human parainfluenza 3 virus (strain Wash/47885/57) (HPIV-3) protein is Hemagglutinin-neuraminidase (HN).